Here is a 248-residue protein sequence, read N- to C-terminus: 4-hydroxy-tetrahydrodipicolinate reductase (248 aa).

Residues 9-14 (GAQGRV), 77-79 (GTT), and 104-107 (APNF) contribute to the NAD(+) site. Residue His134 is the Proton donor/acceptor of the active site. His135 provides a ligand contact to (S)-2,3,4,5-tetrahydrodipicolinate. Residue Lys138 is the Proton donor of the active site. 144–145 (GT) is a (S)-2,3,4,5-tetrahydrodipicolinate binding site. The tract at residues 157–176 (RREAGMPTQPDATEQSLDGA) is disordered.

Belongs to the DapB family.

Its subcellular location is the cytoplasm. The enzyme catalyses (S)-2,3,4,5-tetrahydrodipicolinate + NAD(+) + H2O = (2S,4S)-4-hydroxy-2,3,4,5-tetrahydrodipicolinate + NADH + H(+). The catalysed reaction is (S)-2,3,4,5-tetrahydrodipicolinate + NADP(+) + H2O = (2S,4S)-4-hydroxy-2,3,4,5-tetrahydrodipicolinate + NADPH + H(+). It functions in the pathway amino-acid biosynthesis; L-lysine biosynthesis via DAP pathway; (S)-tetrahydrodipicolinate from L-aspartate: step 4/4. Functionally, catalyzes the conversion of 4-hydroxy-tetrahydrodipicolinate (HTPA) to tetrahydrodipicolinate. This chain is 4-hydroxy-tetrahydrodipicolinate reductase, found in Corynebacterium diphtheriae (strain ATCC 700971 / NCTC 13129 / Biotype gravis).